The following is a 110-amino-acid chain: Large ribosomal subunit protein uL22 (110 aa).

It belongs to the universal ribosomal protein uL22 family. Part of the 50S ribosomal subunit.

In terms of biological role, this protein binds specifically to 23S rRNA; its binding is stimulated by other ribosomal proteins, e.g. L4, L17, and L20. It is important during the early stages of 50S assembly. It makes multiple contacts with different domains of the 23S rRNA in the assembled 50S subunit and ribosome. Its function is as follows. The globular domain of the protein is located near the polypeptide exit tunnel on the outside of the subunit, while an extended beta-hairpin is found that lines the wall of the exit tunnel in the center of the 70S ribosome. The sequence is that of Large ribosomal subunit protein uL22 from Pseudomonas savastanoi pv. phaseolicola (strain 1448A / Race 6) (Pseudomonas syringae pv. phaseolicola (strain 1448A / Race 6)).